The chain runs to 334 residues: Ketol-acid reductoisomerase (NADP(+)) (334 aa).

A KARI N-terminal Rossmann domain is found at 1 to 181; sequence MNIYYDKNAD…GGGRTGILET (181 aa). Residues 24-27, arginine 47, serine 50, serine 52, and 82-85 each bind NADP(+); these read YGSQ and DEFQ. The active site involves histidine 107. Glycine 133 is an NADP(+) binding site. The KARI C-terminal knotted domain occupies 182–323; that stretch reads SFKDETETDL…ESLRSMMPWI (142 aa). Positions 190, 194, 226, and 230 each coordinate Mg(2+). Substrate is bound at residue serine 251.

Belongs to the ketol-acid reductoisomerase family. Mg(2+) serves as cofactor.

The enzyme catalyses (2R)-2,3-dihydroxy-3-methylbutanoate + NADP(+) = (2S)-2-acetolactate + NADPH + H(+). It catalyses the reaction (2R,3R)-2,3-dihydroxy-3-methylpentanoate + NADP(+) = (S)-2-ethyl-2-hydroxy-3-oxobutanoate + NADPH + H(+). It functions in the pathway amino-acid biosynthesis; L-isoleucine biosynthesis; L-isoleucine from 2-oxobutanoate: step 2/4. It participates in amino-acid biosynthesis; L-valine biosynthesis; L-valine from pyruvate: step 2/4. In terms of biological role, involved in the biosynthesis of branched-chain amino acids (BCAA). Catalyzes an alkyl-migration followed by a ketol-acid reduction of (S)-2-acetolactate (S2AL) to yield (R)-2,3-dihydroxy-isovalerate. In the isomerase reaction, S2AL is rearranged via a Mg-dependent methyl migration to produce 3-hydroxy-3-methyl-2-ketobutyrate (HMKB). In the reductase reaction, this 2-ketoacid undergoes a metal-dependent reduction by NADPH to yield (R)-2,3-dihydroxy-isovalerate. The polypeptide is Ketol-acid reductoisomerase (NADP(+)) (Vesicomyosocius okutanii subsp. Calyptogena okutanii (strain HA)).